A 197-amino-acid polypeptide reads, in one-letter code: dTTP/UTP pyrophosphatase (197 aa).

Catalysis depends on aspartate 70, which acts as the Proton acceptor.

The protein belongs to the Maf family. YhdE subfamily. The cofactor is a divalent metal cation.

The protein resides in the cytoplasm. It catalyses the reaction dTTP + H2O = dTMP + diphosphate + H(+). The catalysed reaction is UTP + H2O = UMP + diphosphate + H(+). In terms of biological role, nucleoside triphosphate pyrophosphatase that hydrolyzes dTTP and UTP. May have a dual role in cell division arrest and in preventing the incorporation of modified nucleotides into cellular nucleic acids. The polypeptide is dTTP/UTP pyrophosphatase (yceF2) (Escherichia coli O6:K15:H31 (strain 536 / UPEC)).